The following is a 226-amino-acid chain: 2-dehydro-3-deoxy-phosphogluconate aldolase (226 aa).

The active-site Proton acceptor is E57. Positions 61, 85, and 145 each coordinate pyruvate. K145 functions as the Schiff-base intermediate with substrate in the catalytic mechanism.

The protein belongs to the KHG/KDPG aldolase family. As to quaternary structure, homotrimer.

The catalysed reaction is 2-dehydro-3-deoxy-6-phospho-D-gluconate = D-glyceraldehyde 3-phosphate + pyruvate. It functions in the pathway carbohydrate acid metabolism; 2-dehydro-3-deoxy-D-gluconate degradation; D-glyceraldehyde 3-phosphate and pyruvate from 2-dehydro-3-deoxy-D-gluconate: step 2/2. In terms of biological role, involved in the degradation of glucose via the Entner-Doudoroff pathway. Catalyzes the reversible, stereospecific retro-aldol cleavage of 2-keto-3-deoxy-6-phosphogluconate (KDPG) to pyruvate and D-glyceraldehyde-3-phosphate. The polypeptide is 2-dehydro-3-deoxy-phosphogluconate aldolase (Pseudomonas putida (Arthrobacter siderocapsulatus)).